The sequence spans 313 residues: HTH-type transcriptional regulator CysB (313 aa).

The HTH lysR-type domain maps to 1 to 59; the sequence is MNLHQFRFVREAVRQNFNLTEAAKALYTSQPGVSKAIIELEDELGVEIFTRHGKRVRSL. The segment at residues 19–38 is a DNA-binding region (H-T-H motif); the sequence is LTEAAKALYTSQPGVSKAII.

Belongs to the LysR transcriptional regulatory family.

In terms of biological role, transcriptional regulator preferentially involved in the control of sulfate transport and reduction. Binds to DNA at target promoter regions. This is HTH-type transcriptional regulator CysB from Burkholderia cenocepacia (strain ATCC BAA-245 / DSM 16553 / LMG 16656 / NCTC 13227 / J2315 / CF5610) (Burkholderia cepacia (strain J2315)).